The following is a 505-amino-acid chain: Probable RNA exonuclease NGL3 (505 aa).

Disordered regions lie at residues 1–75 and 334–369; these read MDSQ…FPTP and RNGEESDQDDEECDEKSRGEGHSDQPQNPKPESFTA. Over residues 10-23 the composition is skewed to polar residues; it reads SPSQKESSSTSGLV. Residues 36-54 are compositionally biased toward basic and acidic residues; that stretch reads HRDQLSVDQIKKIREERAQ. The residue at position 62 (S62) is a Phosphoserine. The span at 338 to 347 shows a compositional bias: acidic residues; it reads ESDQDDEECD.

The protein belongs to the CCR4/nocturin family.

The protein is Probable RNA exonuclease NGL3 (NGL3) of Saccharomyces cerevisiae (strain ATCC 204508 / S288c) (Baker's yeast).